Consider the following 339-residue polypeptide: Phosphate acyltransferase (339 aa).

This sequence belongs to the PlsX family. In terms of assembly, homodimer. Probably interacts with PlsY.

Its subcellular location is the cytoplasm. It catalyses the reaction a fatty acyl-[ACP] + phosphate = an acyl phosphate + holo-[ACP]. It participates in lipid metabolism; phospholipid metabolism. In terms of biological role, catalyzes the reversible formation of acyl-phosphate (acyl-PO(4)) from acyl-[acyl-carrier-protein] (acyl-ACP). This enzyme utilizes acyl-ACP as fatty acyl donor, but not acyl-CoA. The polypeptide is Phosphate acyltransferase (Aeromonas salmonicida (strain A449)).